Reading from the N-terminus, the 274-residue chain is Putative pyruvate, phosphate dikinase regulatory protein 1 (274 aa).

149-156 (GISRTSKT) provides a ligand contact to ADP.

It belongs to the pyruvate, phosphate/water dikinase regulatory protein family. PDRP subfamily.

It carries out the reaction N(tele)-phospho-L-histidyl/L-threonyl-[pyruvate, phosphate dikinase] + ADP = N(tele)-phospho-L-histidyl/O-phospho-L-threonyl-[pyruvate, phosphate dikinase] + AMP + H(+). The catalysed reaction is N(tele)-phospho-L-histidyl/O-phospho-L-threonyl-[pyruvate, phosphate dikinase] + phosphate + H(+) = N(tele)-phospho-L-histidyl/L-threonyl-[pyruvate, phosphate dikinase] + diphosphate. Bifunctional serine/threonine kinase and phosphorylase involved in the regulation of the pyruvate, phosphate dikinase (PPDK) by catalyzing its phosphorylation/dephosphorylation. In Listeria monocytogenes serotype 4b (strain F2365), this protein is Putative pyruvate, phosphate dikinase regulatory protein 1.